We begin with the raw amino-acid sequence, 2380 residues long: Probable polyketide synthase 25 (2380 aa).

A compositionally biased stretch (polar residues) spans methionine 1–lysine 18. The disordered stretch occupies residues methionine 1–asparagine 29. In terms of domain architecture, Ketosynthase family 3 (KS3) spans aspartate 31–glutamine 457. Residues cysteine 198, histidine 340, and histidine 380 each act as for beta-ketoacyl synthase activity in the active site. Positions glycine 649–tyrosine 682 are acyl/malonyl transferase. The active-site For acyl/malonyl transferase activity is the serine 659. Residues isoleucine 948–lysine 1070 are N-terminal hotdog fold. The 287-residue stretch at isoleucine 948–proline 1234 folds into the PKS/mFAS DH domain. The active-site Proton acceptor; for dehydratase activity is the histidine 982. Positions asparagine 1085–proline 1234 are C-terminal hotdog fold. Aspartate 1148 serves as the catalytic Proton donor; for dehydratase activity. Residues lysine 2299–phenylalanine 2376 form the Carrier domain. Serine 2336 carries the O-(pantetheine 4'-phosphoryl)serine modification.

It depends on pantetheine 4'-phosphate as a cofactor.

In terms of biological role, probable polyketide synthase. In Dictyostelium discoideum (Social amoeba), this protein is Probable polyketide synthase 25 (pks25).